The primary structure comprises 404 residues: Adenylosuccinate synthetase (404 aa).

GTP is bound by residues 12–18 (GDEGKGK) and 40–42 (GHT). Residue Asp13 is the Proton acceptor of the active site. Mg(2+) contacts are provided by Asp13 and Gly40. Residues 13 to 16 (DEGK), 38 to 41 (NAGH), Thr121, Arg135, Gln213, Thr228, and Arg296 contribute to the IMP site. The active-site Proton donor is His41. A substrate-binding site is contributed by 292-298 (TTTGRAR). Residues Arg298, 324 to 326 (KMD), and 389 to 391 (SCG) contribute to the GTP site.

Belongs to the adenylosuccinate synthetase family. As to quaternary structure, homodimer. Requires Mg(2+) as cofactor.

Its subcellular location is the cytoplasm. It catalyses the reaction IMP + L-aspartate + GTP = N(6)-(1,2-dicarboxyethyl)-AMP + GDP + phosphate + 2 H(+). It participates in purine metabolism; AMP biosynthesis via de novo pathway; AMP from IMP: step 1/2. In terms of biological role, plays an important role in the de novo pathway of purine nucleotide biosynthesis. Catalyzes the first committed step in the biosynthesis of AMP from IMP. In Deinococcus geothermalis (strain DSM 11300 / CIP 105573 / AG-3a), this protein is Adenylosuccinate synthetase.